A 577-amino-acid chain; its full sequence is Urease subunit alpha (577 aa).

In terms of domain architecture, Urease spans 136–577 (GAIDCHVHLI…LPMAQRYFLF (442 aa)). Histidine 141, histidine 143, and lysine 224 together coordinate Ni(2+). Lysine 224 carries the post-translational modification N6-carboxylysine. Histidine 226 contributes to the substrate binding site. Histidine 253 and histidine 279 together coordinate Ni(2+). The active-site Proton donor is the histidine 327. Aspartate 367 is a Ni(2+) binding site.

The protein belongs to the metallo-dependent hydrolases superfamily. Urease alpha subunit family. In terms of assembly, heterotrimer of UreA (gamma), UreB (beta) and UreC (alpha) subunits. Three heterotrimers associate to form the active enzyme. Ni cation is required as a cofactor. Post-translationally, carboxylation allows a single lysine to coordinate two nickel ions.

The protein resides in the cytoplasm. It carries out the reaction urea + 2 H2O + H(+) = hydrogencarbonate + 2 NH4(+). The protein operates within nitrogen metabolism; urea degradation; CO(2) and NH(3) from urea (urease route): step 1/1. The chain is Urease subunit alpha from Mycobacterium marinum (strain ATCC BAA-535 / M).